Here is an 837-residue protein sequence, read N- to C-terminus: Translation initiation factor IF-2 (837 aa).

Residues A97–E139 show a composition bias toward basic and acidic residues. Residues A97–P253 form a disordered region. The segment covering A140–A175 has biased composition (low complexity). Residues P176 to R197 show a composition bias toward basic and acidic residues. Positions D198–L208 are enriched in basic residues. Residues R219–R229 show a composition bias toward basic and acidic residues. Residues R230–Q244 are compositionally biased toward basic residues. A tr-type G domain is found at A337–E504. The tract at residues G346–T353 is G1. G346–T353 contacts GTP. The segment at G371–H375 is G2. A G3 region spans residues D392–G395. GTP-binding positions include D392 to H396 and N446 to D449. A G4 region spans residues N446–D449. The interval S482–K484 is G5.

The protein belongs to the TRAFAC class translation factor GTPase superfamily. Classic translation factor GTPase family. IF-2 subfamily.

The protein resides in the cytoplasm. In terms of biological role, one of the essential components for the initiation of protein synthesis. Protects formylmethionyl-tRNA from spontaneous hydrolysis and promotes its binding to the 30S ribosomal subunits. Also involved in the hydrolysis of GTP during the formation of the 70S ribosomal complex. The polypeptide is Translation initiation factor IF-2 (Stutzerimonas stutzeri (strain A1501) (Pseudomonas stutzeri)).